The primary structure comprises 200 residues: Protein Syd (200 aa).

It belongs to the Syd family.

It localises to the cell inner membrane. Functionally, interacts with the SecY protein in vivo. May bind preferentially to an uncomplexed state of SecY, thus functioning either as a chelating agent for excess SecY in the cell or as a regulatory factor that negatively controls the translocase function. The polypeptide is Protein Syd (Colwellia psychrerythraea (strain 34H / ATCC BAA-681) (Vibrio psychroerythus)).